A 452-amino-acid polypeptide reads, in one-letter code: Sesamin methylene transferase (452 aa).

It belongs to the GcvT family. As to quaternary structure, homotrimer.

The catalysed reaction is (+)-sesamin + (6S)-5,6,7,8-tetrahydrofolyl-(gamma-L-Glu)(n) = (+)-sesamin monocatechol + (6R)-5,10-methylenetetrahydrofolyl-(gamma-L-Glu)(n). The enzyme catalyses (+)-sesamin monocatechol + (6S)-5,6,7,8-tetrahydrofolyl-(gamma-L-Glu)(n) = (+)-sesamin dicatechol + (6R)-5,10-methylenetetrahydrofolyl-(gamma-L-Glu)(n). In terms of biological role, converts sesamin into sesamin mono- and di-catechol. Catalyzes a ring cleavage to transfer the methylene group to tetrahydrofolate (THF). Also active with (+)-episesamin, (-)-asarinin, sesaminol, (+)-sesamolin and piperine. This Sinomonas sp. (strain No.22) protein is Sesamin methylene transferase.